A 439-amino-acid chain; its full sequence is C4-dicarboxylate transport protein 1 (439 aa).

A run of 6 helical transmembrane segments spans residues 18–38 (VLYI…WLWP), 56–76 (LIKM…IAHV), 91–111 (IYFE…ANVI), 157–177 (GEIL…MSLG), 193–213 (AIFG…FGAM), and 231–251 (LIAT…GIIA).

The protein belongs to the dicarboxylate/amino acid:cation symporter (DAACS) (TC 2.A.23) family.

It localises to the cell inner membrane. In terms of biological role, responsible for the transport of dicarboxylates such as succinate, fumarate, and malate from the periplasm across the membrane. The sequence is that of C4-dicarboxylate transport protein 1 from Bradyrhizobium sp. (strain ORS 278).